The primary structure comprises 332 residues: Aquaporin-7-2 (332 aa).

Polar residues predominate over residues 1 to 40 (MSGQHQITEQPSGNPLSRTSTLIQEKPLTPTSSHAGTQKQ). A disordered region spans residues 1–46 (MSGQHQITEQPSGNPLSRTSTLIQEKPLTPTSSHAGTQKQPEAPRQ). At 1 to 66 (MSGQHQITEQ…RHAIRKPMAE (66 aa)) the chain is on the cytoplasmic side. Residues 67–87 (FFGVALLIIFGAGSACQVVLS) traverse the membrane as a helical segment. At 88–100 (TNPDVASSARGSF) the chain is on the extracellular side. The chain crosses the membrane as a helical span at residues 101–121 (LSINFGWAIGIAMGVWVSGGI). Topologically, residues 122–144 (SGGHINPAITIAMATYRGFPWCK) are cytoplasmic. Positions 127–129 (NPA) match the NPA 1 motif. Residues 145 to 165 (VPSYILAQVLGGVVGAALVYA) traverse the membrane as a helical segment. The Extracellular portion of the chain corresponds to 166–199 (NYIHAIDVFEGGHHIRTEATASLFATYALPYMTQ). The helical transmembrane segment at 200–220 (ASCFFSEFLATAVLSMMVFAL) threads the bilayer. Residues 221–230 (TDKRNHSPTN) are Cytoplasmic-facing. The helical transmembrane segment at 231-251 (GLLPFALFILFVGLGASLGME) threads the bilayer. Over 252–283 (TAYALNPARDFGPRLFLAMAGYGKALFNYRSQ) the chain is Extracellular. Positions 257–259 (NPA) match the NPA 2 motif. A helical transmembrane segment spans residues 284–304 (YWLWAPIIAPVLGAQAGGLLY). Topologically, residues 305–332 (DTFLNDGDNSPIKWRCASSQEQQLAEVV) are cytoplasmic.

It belongs to the MIP/aquaporin (TC 1.A.8) family.

It localises to the membrane. It catalyses the reaction H2O(in) = H2O(out). Its function is as follows. Water channel required to facilitate the transport of water across membranes. Does not mediate the transport carbon dioxide across the membrane. The sequence is that of Aquaporin-7-2 from Laccaria bicolor (Bicoloured deceiver).